The primary structure comprises 159 residues: Insulin-like peptide 7 (159 aa).

The first 31 residues, Met-1–Ala-31, serve as a signal peptide directing secretion. 3 cysteine pairs are disulfide-bonded: Cys-63-Cys-136, Cys-75-Cys-150, and Cys-135-Cys-141. The propeptide at Thr-90 to Ser-121 is connecting peptide.

It belongs to the insulin family. As to quaternary structure, heterodimer of a B chain and an A chain linked by two disulfide bonds. As to expression, broadly expressed at a low level throughout the embryo, except the yolk. Expressed at a moderate level in the embryonic midgut. Larval expression is restricted to ten cells of the ventral nerve cord - in four pairs of centrally located cells in the most posterior abdominal segments and in one pair of dorsally located cells in the A1 or A2 segments.

The protein resides in the secreted. Its function is as follows. Possible ligand of InR/insulin-like receptor. The polypeptide is Insulin-like peptide 7 (Drosophila melanogaster (Fruit fly)).